The primary structure comprises 712 residues: MSSSNQNLAIAANAIDITAPESTIPNKSKVPNKSAESSQSTVPKAPSRREIRAQAQAFIDTLAPLQHTNSQKVYLEGSSADIRVGMRQILQTDTLVGGTDDAPIMEKNPPIRVYDCAGPYSDPEADINVRLGLVKLRQNWILARKDTEQLPCATSDFTQQRLADDGLDHLRFEAGSSAIVRPRRALQGKRVSQLHYARQGIITPEMEYVAIRENMALAEVQDEILNRKAKGEAFGALVGEPITAEFVRAEVARGRAIIPLNINHPEAEPMIIGRNFLVKVNANIGNSAVTSSIEEEVEKLVWSTRWGADTVMDLSTGRYIHETREWIIRNSPVPIGTVPIYQALEKVNGVAEDLTWEVFRDTLIEQAEQGVDYFTIHAGVLLRYVPMTAKRVTGIVSRGGSIMAKWCLSHHKENFLYSHFREICELCVAYDVSLSLGDGMRPGSIADANDAAQFAELETLGELVKIAWEYDVQTIIEGPGHIPMQLIKENMDKQLAHCGEAPFYTLGPQITDIAPGYDHFTSGIGAAMIAWYGCAMLCYVTPKEHLGLPNKQDVKQGLIAYKIAAHAADVAKGHPSAQIRDNALAKARFEFRWEDQYNLGLDPETARAYHDESLPQESAKVAHFCSMCGPKFCSMKITQDVRAYAAGLEAAQTKAEQVEAAAQAMQVTIKTPQELEAAMALKSAQFAASGAEIYQVIDKHVKDKLVAEAEEA.

The tract at residues 14–49 (AIDITAPESTIPNKSKVPNKSAESSQSTVPKAPSRR) is disordered. Over residues 20-42 (PESTIPNKSKVPNKSAESSQSTV) the composition is skewed to polar residues. Substrate is bound by residues Asn-283, Met-312, Tyr-341, His-377, 397-399 (SRG), 438-441 (DGMR), and Glu-477. His-481 provides a ligand contact to Zn(2+). Tyr-504 contributes to the substrate binding site. Residue His-545 coordinates Zn(2+). Positions 625, 628, and 633 each coordinate [4Fe-4S] cluster.

The protein belongs to the ThiC family. As to quaternary structure, homodimer. Requires [4Fe-4S] cluster as cofactor.

The enzyme catalyses 5-amino-1-(5-phospho-beta-D-ribosyl)imidazole + S-adenosyl-L-methionine = 4-amino-2-methyl-5-(phosphooxymethyl)pyrimidine + CO + 5'-deoxyadenosine + formate + L-methionine + 3 H(+). It functions in the pathway cofactor biosynthesis; thiamine diphosphate biosynthesis. In terms of biological role, catalyzes the synthesis of the hydroxymethylpyrimidine phosphate (HMP-P) moiety of thiamine from aminoimidazole ribotide (AIR) in a radical S-adenosyl-L-methionine (SAM)-dependent reaction. This is Phosphomethylpyrimidine synthase from Shewanella putrefaciens (strain CN-32 / ATCC BAA-453).